The primary structure comprises 252 residues: 5-oxoprolinase subunit A (252 aa).

It belongs to the LamB/PxpA family. Forms a complex composed of PxpA, PxpB and PxpC.

The enzyme catalyses 5-oxo-L-proline + ATP + 2 H2O = L-glutamate + ADP + phosphate + H(+). Catalyzes the cleavage of 5-oxoproline to form L-glutamate coupled to the hydrolysis of ATP to ADP and inorganic phosphate. The protein is 5-oxoprolinase subunit A of Staphylococcus epidermidis (strain ATCC 35984 / DSM 28319 / BCRC 17069 / CCUG 31568 / BM 3577 / RP62A).